The primary structure comprises 901 residues: HTH-type transcriptional regulator MalT (901 aa).

39–46 (SPAGYGKT) provides a ligand contact to ATP. The 66-residue stretch at 829–894 (ELIRTSPLTQ…DAVQHAQQLL (66 aa)) folds into the HTH luxR-type domain. Residues 853-872 (NEQIAGELAVAATTIKTHIR) constitute a DNA-binding region (H-T-H motif).

Belongs to the MalT family. In terms of assembly, monomer in solution. Oligomerizes to an active state in the presence of the positive effectors ATP and maltotriose.

With respect to regulation, activated by ATP and maltotriose, which are both required for DNA binding. In terms of biological role, positively regulates the transcription of the maltose regulon whose gene products are responsible for uptake and catabolism of malto-oligosaccharides. Specifically binds to the promoter region of its target genes, recognizing a short DNA motif called the MalT box. The chain is HTH-type transcriptional regulator MalT from Salmonella typhimurium (strain LT2 / SGSC1412 / ATCC 700720).